A 369-amino-acid polypeptide reads, in one-letter code: P2X receptor B (369 aa).

Over 1–25 the chain is Cytoplasmic; that stretch reads MTIDWDSILSYNTIKVVRIRDRRLG. Residues 26–46 form a helical membrane-spanning segment; sequence ILHLCFLIVIVLYVVVYSAII. Residues 47–369 are Lumenal-facing; the sequence is KKGYVTTEEP…DKLYHNIEAL (323 aa). A pore-forming motif region spans residues 283 to 296; it reads RHAIRLIFIQTGVI.

Belongs to the P2X receptor family.

It localises to the contractile vacuole membrane. Its function is as follows. P2X receptors are ATP-gated ion channels that play a role in intracellular calcium signaling. Not required for the purinergic response to extracellular nucleotides. Not essential for osmoregulation. Inward currents are evoked by intracellular ATP and ATP analogs. Insensitive to the P2 receptor antagonists PPADS and suramin, and also copper ions. Inhibited by sodium ions. Permeable to chloride ions. The polypeptide is P2X receptor B (p2xB) (Dictyostelium discoideum (Social amoeba)).